The primary structure comprises 146 residues: UPF0178 protein Lin1493 (146 aa).

This sequence belongs to the UPF0178 family.

This chain is UPF0178 protein Lin1493, found in Listeria innocua serovar 6a (strain ATCC BAA-680 / CLIP 11262).